The chain runs to 428 residues: GTPase Obg (428 aa).

In terms of domain architecture, Obg spans 1–158 (MFVDQVQVEV…RFIKLELKVL (158 aa)). Residues 159–333 (ADVGLVGFPS…LMHKTAEVLK (175 aa)) form the OBG-type G domain. Residues 165 to 172 (GFPSVGKS), 190 to 194 (FTTLV), 212 to 215 (DLPG), 282 to 285 (TKMD), and 314 to 316 (SSL) each bind GTP. Mg(2+) is bound by residues serine 172 and threonine 192. The OCT domain occupies 350–428 (YKYQPEPALK…IDDFTFEFVE (79 aa)).

Belongs to the TRAFAC class OBG-HflX-like GTPase superfamily. OBG GTPase family. In terms of assembly, monomer. It depends on Mg(2+) as a cofactor.

It is found in the cytoplasm. In terms of biological role, an essential GTPase which binds GTP, GDP and possibly (p)ppGpp with moderate affinity, with high nucleotide exchange rates and a fairly low GTP hydrolysis rate. Plays a role in control of the cell cycle, stress response, ribosome biogenesis and in those bacteria that undergo differentiation, in morphogenesis control. The protein is GTPase Obg of Lacticaseibacillus paracasei (strain ATCC 334 / BCRC 17002 / CCUG 31169 / CIP 107868 / KCTC 3260 / NRRL B-441) (Lactobacillus paracasei).